The chain runs to 325 residues: MTEITERIVPPPRKVAGVKESSAEKMARIPIKIIPMPAMRKPEWIRMKVPDSARFREIKQVLRENNLHTVCEEASCPNIGECFSGGTATFMILGDICTRRCPFCDVSHGKPLPPDANEPENLGRTIAQMRLKYVVITSVDRDDLRDGGAQHFVDCIAAVRAHSPQIKVEILVPDFRGRLDRAIHILKAAPPDVMNHNLETVPRLYKEARPGSDYQNSLDLLKEFGKLHPEVPTKSGLMLGLGETDEEILDVMRDLRAHNVTMLTLGQYLQPSPHHLPVKRFVTPQRFAEFERQALAMGFTHAACGPMVRSSYHADHQAQQAGVNF.

Residues C71, C76, C82, C97, C101, C104, and S311 each coordinate [4Fe-4S] cluster. The Radical SAM core domain maps to 83 to 300; it reads FSGGTATFMI…ERQALAMGFT (218 aa).

It belongs to the radical SAM superfamily. Lipoyl synthase family. Requires [4Fe-4S] cluster as cofactor.

It is found in the cytoplasm. The enzyme catalyses [[Fe-S] cluster scaffold protein carrying a second [4Fe-4S](2+) cluster] + N(6)-octanoyl-L-lysyl-[protein] + 2 oxidized [2Fe-2S]-[ferredoxin] + 2 S-adenosyl-L-methionine + 4 H(+) = [[Fe-S] cluster scaffold protein] + N(6)-[(R)-dihydrolipoyl]-L-lysyl-[protein] + 4 Fe(3+) + 2 hydrogen sulfide + 2 5'-deoxyadenosine + 2 L-methionine + 2 reduced [2Fe-2S]-[ferredoxin]. It functions in the pathway protein modification; protein lipoylation via endogenous pathway; protein N(6)-(lipoyl)lysine from octanoyl-[acyl-carrier-protein]: step 2/2. Functionally, catalyzes the radical-mediated insertion of two sulfur atoms into the C-6 and C-8 positions of the octanoyl moiety bound to the lipoyl domains of lipoate-dependent enzymes, thereby converting the octanoylated domains into lipoylated derivatives. The chain is Lipoyl synthase from Methylobacillus flagellatus (strain ATCC 51484 / DSM 6875 / VKM B-1610 / KT).